A 762-amino-acid chain; its full sequence is Endonuclease MutS2 (762 aa).

329–336 serves as a coordination point for ATP; it reads GPNTGGKT. A Smr domain is found at 682-757; the sequence is LNLIGKDVET…GSGVTVVYLE (76 aa).

It belongs to the DNA mismatch repair MutS family. MutS2 subfamily. Homodimer. Binds to stalled ribosomes, contacting rRNA.

Endonuclease that is involved in the suppression of homologous recombination and thus may have a key role in the control of bacterial genetic diversity. Its function is as follows. Acts as a ribosome collision sensor, splitting the ribosome into its 2 subunits. Detects stalled/collided 70S ribosomes which it binds and splits by an ATP-hydrolysis driven conformational change. Acts upstream of the ribosome quality control system (RQC), a ribosome-associated complex that mediates the extraction of incompletely synthesized nascent chains from stalled ribosomes and their subsequent degradation. Probably generates substrates for RQC. This Aquifex aeolicus (strain VF5) protein is Endonuclease MutS2.